The primary structure comprises 319 residues: Meiotic drive suppressor wtf16 (319 aa).

2 disordered regions span residues 1–22 (MKNN…KTGH) and 35–68 (DSEE…RSTD). The next 6 membrane-spanning stretches (helical) occupy residues 73-93 (FLIK…LAIC), 110-130 (WTLF…LTYF), 153-173 (VVII…CIKF), 187-207 (CSIS…FWTL), 215-235 (FQVL…MYLF), and 241-261 (ATGY…FFFY).

This sequence belongs to the WTF family. Homomer. Interacts with other proteins that exhibit high sequence similarity.

Its subcellular location is the spore membrane. The protein resides in the vacuole membrane. Its function is as follows. Acts as a suppressor component of the dual wtf meiotic drive system, and can suppress but not confer meiotic drive by compatible poisons. Wtf meiotic drive systems promote unequal transmission of alleles from the parental zygote to progeny spores by encoding a poison and an antidote from the same locus; the poison is trans-acting and forms toxic aggregates in all spores within an ascus, wherease the antidote is spore-specific and targets aggregates for degradation by the vacuole. Meiotic drive by wtf systems therefore lead to poisoning of all progeny that do not inherit the dual poison/antidote allele, or express a compatible antidote. The protein is Meiotic drive suppressor wtf16 of Schizosaccharomyces pombe (strain 972 / ATCC 24843) (Fission yeast).